A 593-amino-acid chain; its full sequence is Aspartate--tRNA(Asp/Asn) ligase (593 aa).

Residue Glu175 coordinates L-aspartate. The tract at residues Gln199 to Lys202 is aspartate. L-aspartate contacts are provided by Arg221 and His452. Arg221–Glu223 contributes to the ATP binding site. Glu486 contributes to the ATP binding site. Arg493 provides a ligand contact to L-aspartate. Gly538–Arg541 contacts ATP.

It belongs to the class-II aminoacyl-tRNA synthetase family. Type 1 subfamily. In terms of assembly, homodimer.

Its subcellular location is the cytoplasm. The enzyme catalyses tRNA(Asx) + L-aspartate + ATP = L-aspartyl-tRNA(Asx) + AMP + diphosphate. In terms of biological role, aspartyl-tRNA synthetase with relaxed tRNA specificity since it is able to aspartylate not only its cognate tRNA(Asp) but also tRNA(Asn). Reaction proceeds in two steps: L-aspartate is first activated by ATP to form Asp-AMP and then transferred to the acceptor end of tRNA(Asp/Asn). In Novosphingobium aromaticivorans (strain ATCC 700278 / DSM 12444 / CCUG 56034 / CIP 105152 / NBRC 16084 / F199), this protein is Aspartate--tRNA(Asp/Asn) ligase.